A 371-amino-acid polypeptide reads, in one-letter code: Mannose-1-phosphate guanylyltransferase catalytic subunit beta (371 aa).

The interval 14 to 233 (RALILVGGYG…TGFWMDIGQP (220 aa)) is substrate-binding domain. Position 122 (Asp-122) interacts with GDP-alpha-D-mannose. Mg(2+) is bound at residue Asp-122. Residue Lys-173 is part of the active site. GDP-alpha-D-mannose is bound at residue Asp-229. Position 229 (Asp-229) interacts with Mg(2+). Positions 256–371 (YTGPGVVGNV…ASVPEPQIIM (116 aa)) are hexapeptide repeat domain.

Belongs to the transferase hexapeptide repeat family. As to quaternary structure, component of the GMPPA-GMPPB mannose-1-phosphate guanylyltransferase complex composed of 4 Gmppa subunits and 8 Gmppb subunits; the complex is organized into three layers, a central layer made up of 2 Gmppa dimers sandwiched between two layers each made up of 2 Gmppb dimers. Gmppb catalytic activity is reduced when part of the complex and binding of GDP-alpha-D-Mannose by Gmppa induces allosteric feedback inhibition of Gmppb. It depends on Mg(2+) as a cofactor.

The catalysed reaction is alpha-D-mannose 1-phosphate + GTP + H(+) = GDP-alpha-D-mannose + diphosphate. It functions in the pathway nucleotide-sugar biosynthesis; GDP-alpha-D-mannose biosynthesis; GDP-alpha-D-mannose from alpha-D-mannose 1-phosphate (GTP route): step 1/1. With respect to regulation, enzyme activity is reduced by incorporation into the GMPPA-GMPPB mannose-1-phosphate guanylyltransferase complex. Allosterically inhibited, when part of the GMPPA-GMPPB complex, by GDP-alpha-D-mannose binding to Gmppa. Catalytic subunit of the GMPPA-GMPPB mannose-1-phosphate guanylyltransferase complex. Catalyzes the formation of GDP-mannose, an essential precursor of glycan moieties of glycoproteins and glycolipids. Can catalyze the reverse reaction in vitro. Together with GMPPA regulates GDP-alpha-D-mannose levels. This is Mannose-1-phosphate guanylyltransferase catalytic subunit beta from Drosophila pseudoobscura pseudoobscura (Fruit fly).